Consider the following 227-residue polypeptide: Cytochrome c oxidase subunit 2 (227 aa).

Topologically, residues 1 to 14 (MAYPFELGFQDATS) are mitochondrial intermembrane. Residues 15 to 45 (PIMEELLHFHDHTLMIVFLISSLVLYIISLM) traverse the membrane as a helical segment. At 46 to 59 (LTTKLTHTSTMDAQ) the chain is on the mitochondrial matrix side. Residues 60–87 (EVETIWTILPAIILILIALPSLRILYMM) form a helical membrane-spanning segment. At 88 to 227 (DEINDPSLTV…HFENWSSSML (140 aa)) the chain is on the mitochondrial intermembrane side. His161, Cys196, Glu198, Cys200, His204, and Met207 together coordinate Cu cation. Glu198 lines the Mg(2+) pocket.

The protein belongs to the cytochrome c oxidase subunit 2 family. In terms of assembly, component of the cytochrome c oxidase (complex IV, CIV), a multisubunit enzyme composed of 14 subunits. The complex is composed of a catalytic core of 3 subunits MT-CO1, MT-CO2 and MT-CO3, encoded in the mitochondrial DNA, and 11 supernumerary subunits COX4I, COX5A, COX5B, COX6A, COX6B, COX6C, COX7A, COX7B, COX7C, COX8 and NDUFA4, which are encoded in the nuclear genome. The complex exists as a monomer or a dimer and forms supercomplexes (SCs) in the inner mitochondrial membrane with NADH-ubiquinone oxidoreductase (complex I, CI) and ubiquinol-cytochrome c oxidoreductase (cytochrome b-c1 complex, complex III, CIII), resulting in different assemblies (supercomplex SCI(1)III(2)IV(1) and megacomplex MCI(2)III(2)IV(2)). Found in a complex with TMEM177, COA6, COX18, COX20, SCO1 and SCO2. Interacts with TMEM177 in a COX20-dependent manner. Interacts with COX20. Interacts with COX16. Cu cation is required as a cofactor.

Its subcellular location is the mitochondrion inner membrane. The catalysed reaction is 4 Fe(II)-[cytochrome c] + O2 + 8 H(+)(in) = 4 Fe(III)-[cytochrome c] + 2 H2O + 4 H(+)(out). In terms of biological role, component of the cytochrome c oxidase, the last enzyme in the mitochondrial electron transport chain which drives oxidative phosphorylation. The respiratory chain contains 3 multisubunit complexes succinate dehydrogenase (complex II, CII), ubiquinol-cytochrome c oxidoreductase (cytochrome b-c1 complex, complex III, CIII) and cytochrome c oxidase (complex IV, CIV), that cooperate to transfer electrons derived from NADH and succinate to molecular oxygen, creating an electrochemical gradient over the inner membrane that drives transmembrane transport and the ATP synthase. Cytochrome c oxidase is the component of the respiratory chain that catalyzes the reduction of oxygen to water. Electrons originating from reduced cytochrome c in the intermembrane space (IMS) are transferred via the dinuclear copper A center (CU(A)) of subunit 2 and heme A of subunit 1 to the active site in subunit 1, a binuclear center (BNC) formed by heme A3 and copper B (CU(B)). The BNC reduces molecular oxygen to 2 water molecules using 4 electrons from cytochrome c in the IMS and 4 protons from the mitochondrial matrix. In Neotamias bulleri (Buller's chipmunk), this protein is Cytochrome c oxidase subunit 2 (MT-CO2).